Consider the following 258-residue polypeptide: Flagellar L-ring protein (258 aa).

A signal peptide spans 1–15 (MKRIVCLALFLSMTG). A lipid anchor (N-palmitoyl cysteine) is attached at C16. A lipid anchor (S-diacylglycerol cysteine) is attached at C16.

It belongs to the FlgH family. In terms of assembly, the basal body constitutes a major portion of the flagellar organelle and consists of four rings (L,P,S, and M) mounted on a central rod.

Its subcellular location is the cell outer membrane. The protein localises to the bacterial flagellum basal body. Its function is as follows. Assembles around the rod to form the L-ring and probably protects the motor/basal body from shearing forces during rotation. This Vibrio atlanticus (strain LGP32) (Vibrio splendidus (strain Mel32)) protein is Flagellar L-ring protein.